A 378-amino-acid polypeptide reads, in one-letter code: 1-acyl-sn-glycerol-3-phosphate acyltransferase delta (378 aa).

The chain crosses the membrane as a helical span at residues 11 to 31 (FLCHLVFCYVFIASGLIINTI). The short motif at 96–101 (HKFEID) is the HXXXXD motif element. 3 consecutive transmembrane segments (helical) span residues 125-145 (ELAYVPIIGWMWYFTEMVFCS), 307-327 (TLVNWLFWASLVLYPFFQFLV), and 338-358 (LASFILVFFVASVGVRWMIGV).

It belongs to the 1-acyl-sn-glycerol-3-phosphate acyltransferase family.

It localises to the endoplasmic reticulum membrane. The enzyme catalyses a 1-acyl-sn-glycero-3-phosphate + an acyl-CoA = a 1,2-diacyl-sn-glycero-3-phosphate + CoA. The catalysed reaction is (4Z,7Z,10Z,13Z,16Z,19Z)-docosahexaenoyl-CoA + 1-hexadecanoyl-sn-glycero-3-phosphate = 1-hexadecanoyl-2-(4Z,7Z,10Z,13Z,16Z,19Z-docosahexaenoyl)-sn-glycero-3-phosphate + CoA. It carries out the reaction 1-octadecanoyl-sn-glycero-3-phosphate + (9Z,12Z)-octadecadienoyl-CoA = 1-octadecanoyl-2-(9Z,12Z-octadecadienoyl)-sn-glycero-3-phosphate + CoA. It catalyses the reaction 1-octadecanoyl-sn-glycero-3-phosphate + (4Z,7Z,10Z,13Z,16Z,19Z)-docosahexaenoyl-CoA = 1-octadecanoyl-2-(4Z,7Z,10Z,13Z,16Z,19Z-docosahexaenoyl)-sn-glycero-3-phosphate + CoA. The enzyme catalyses (4Z,7Z,10Z,13Z,16Z,19Z)-docosahexaenoyl-CoA + 1-(9Z-octadecenoyl)-sn-glycero-3-phosphate = 1-(9Z-octadecenoyl)-2-(4Z,7Z,10Z,13Z,16Z,19Z-docosahexaenoyl)-sn-glycero-3-phosphate + CoA. The protein operates within phospholipid metabolism; CDP-diacylglycerol biosynthesis; CDP-diacylglycerol from sn-glycerol 3-phosphate: step 2/3. Its function is as follows. Converts 1-acyl-sn-glycerol-3-phosphate (lysophosphatidic acid or LPA) into 1,2-diacyl-sn-glycerol-3-phosphate (phosphatidic acid or PA) by incorporating an acyl moiety at the sn-2 position of the glycerol backbone. Exhibits high acyl-CoA specificity for polyunsaturated fatty acyl-CoA, especially docosahexaenoyl-CoA (22:6-CoA, DHA-CoA). The sequence is that of 1-acyl-sn-glycerol-3-phosphate acyltransferase delta (AGPAT4) from Pongo abelii (Sumatran orangutan).